The sequence spans 541 residues: Chaperonin GroEL 2 (541 aa).

ATP contacts are provided by residues 29-32 and 86-90; these read TLGP and DGTTT. Residue Lys132 forms an Isoglutamyl lysine isopeptide (Lys-Gln) (interchain with Q-Cter in protein Pup) linkage. Residues Gly413, 476-478, and Asp492 each bind ATP; that span reads NAA.

This sequence belongs to the chaperonin (HSP60) family. As to quaternary structure, forms a cylinder of 14 subunits composed of two heptameric rings stacked back-to-back. Interacts with the co-chaperonin GroES.

It localises to the secreted. Its subcellular location is the capsule. The protein resides in the cell surface. It is found in the cell wall. The catalysed reaction is ATP + H2O + a folded polypeptide = ADP + phosphate + an unfolded polypeptide.. Functionally, together with its co-chaperonin GroES, plays an essential role in assisting protein folding. The GroEL-GroES system forms a nano-cage that allows encapsulation of the non-native substrate proteins and provides a physical environment optimized to promote and accelerate protein folding. This Mycolicibacterium smegmatis (strain ATCC 700084 / mc(2)155) (Mycobacterium smegmatis) protein is Chaperonin GroEL 2.